The following is a 234-amino-acid chain: Large ribosomal subunit protein uL1 (234 aa).

It belongs to the universal ribosomal protein uL1 family. Part of the 50S ribosomal subunit.

Its function is as follows. Binds directly to 23S rRNA. The L1 stalk is quite mobile in the ribosome, and is involved in E site tRNA release. In terms of biological role, protein L1 is also a translational repressor protein, it controls the translation of the L11 operon by binding to its mRNA. In Anaeromyxobacter dehalogenans (strain 2CP-C), this protein is Large ribosomal subunit protein uL1.